The following is a 483-amino-acid chain: Aspartyl/glutamyl-tRNA(Asn/Gln) amidotransferase subunit B (483 aa).

Belongs to the GatB/GatE family. GatB subfamily. As to quaternary structure, heterotrimer of A, B and C subunits.

It carries out the reaction L-glutamyl-tRNA(Gln) + L-glutamine + ATP + H2O = L-glutaminyl-tRNA(Gln) + L-glutamate + ADP + phosphate + H(+). The enzyme catalyses L-aspartyl-tRNA(Asn) + L-glutamine + ATP + H2O = L-asparaginyl-tRNA(Asn) + L-glutamate + ADP + phosphate + 2 H(+). Its function is as follows. Allows the formation of correctly charged Asn-tRNA(Asn) or Gln-tRNA(Gln) through the transamidation of misacylated Asp-tRNA(Asn) or Glu-tRNA(Gln) in organisms which lack either or both of asparaginyl-tRNA or glutaminyl-tRNA synthetases. The reaction takes place in the presence of glutamine and ATP through an activated phospho-Asp-tRNA(Asn) or phospho-Glu-tRNA(Gln). This Marinobacter nauticus (strain ATCC 700491 / DSM 11845 / VT8) (Marinobacter aquaeolei) protein is Aspartyl/glutamyl-tRNA(Asn/Gln) amidotransferase subunit B.